Reading from the N-terminus, the 456-residue chain is Peptide chain release factor PrfB1, chloroplastic (456 aa).

The transit peptide at Met-1 to Phe-58 directs the protein to the chloroplast.

This sequence belongs to the prokaryotic/mitochondrial release factor family. In terms of tissue distribution, expressed in leaves, stems and flowers.

The protein localises to the plastid. Its subcellular location is the chloroplast stroma. In terms of biological role, directs the termination of translation in response to the peptide chain termination codon UGA. Required for the proper translation, stability and normal processing of UGA-containing polycistronic transcripts in chloroplasts. The sequence is that of Peptide chain release factor PrfB1, chloroplastic from Arabidopsis thaliana (Mouse-ear cress).